The primary structure comprises 268 residues: Tryptophan synthase alpha chain (268 aa).

Residues Glu49 and Asp60 each act as proton acceptor in the active site.

The protein belongs to the TrpA family. Tetramer of two alpha and two beta chains.

The catalysed reaction is (1S,2R)-1-C-(indol-3-yl)glycerol 3-phosphate + L-serine = D-glyceraldehyde 3-phosphate + L-tryptophan + H2O. Its pathway is amino-acid biosynthesis; L-tryptophan biosynthesis; L-tryptophan from chorismate: step 5/5. Its function is as follows. The alpha subunit is responsible for the aldol cleavage of indoleglycerol phosphate to indole and glyceraldehyde 3-phosphate. The sequence is that of Tryptophan synthase alpha chain from Escherichia coli O6:K15:H31 (strain 536 / UPEC).